The following is a 242-amino-acid chain: Probable 2-phosphosulfolactate phosphatase (242 aa).

The protein belongs to the ComB family. Mg(2+) is required as a cofactor.

The catalysed reaction is (2R)-O-phospho-3-sulfolactate + H2O = (2R)-3-sulfolactate + phosphate. The polypeptide is Probable 2-phosphosulfolactate phosphatase (Prochlorococcus marinus (strain NATL2A)).